Reading from the N-terminus, the 230-residue chain is Large ribosomal subunit protein uL1 (230 aa).

This sequence belongs to the universal ribosomal protein uL1 family. As to quaternary structure, part of the 50S ribosomal subunit.

Binds directly to 23S rRNA. The L1 stalk is quite mobile in the ribosome, and is involved in E site tRNA release. In terms of biological role, protein L1 is also a translational repressor protein, it controls the translation of the L11 operon by binding to its mRNA. This chain is Large ribosomal subunit protein uL1, found in Lactobacillus gasseri (strain ATCC 33323 / DSM 20243 / BCRC 14619 / CIP 102991 / JCM 1131 / KCTC 3163 / NCIMB 11718 / NCTC 13722 / AM63).